The sequence spans 667 residues: Probable potassium transport system protein Kup (667 aa).

The next 12 membrane-spanning stretches (helical) occupy residues 16-36 (GFII…LYTM), 58-78 (VSLI…LIAL), 101-121 (WLII…ALTP), 146-166 (TNVI…QRFG), 167-187 (TGVI…VLGI), 221-241 (IFIL…YSDL), 253-273 (WPFV…WILA), 294-314 (VYLV…LISG), 343-363 (LYIP…VLYF), 373-393 (YGLA…YYLI), 399-419 (PLLA…FFLA), and 431-451 (VVVL…GTVI).

The protein belongs to the HAK/KUP transporter (TC 2.A.72) family.

The protein localises to the cell membrane. It catalyses the reaction K(+)(in) + H(+)(in) = K(+)(out) + H(+)(out). Transport of potassium into the cell. Likely operates as a K(+):H(+) symporter. This is Probable potassium transport system protein Kup from Streptococcus equi subsp. zooepidemicus (strain MGCS10565).